The sequence spans 581 residues: Proline--tRNA ligase (581 aa).

This sequence belongs to the class-II aminoacyl-tRNA synthetase family. ProS type 1 subfamily. In terms of assembly, homodimer.

It is found in the cytoplasm. The enzyme catalyses tRNA(Pro) + L-proline + ATP = L-prolyl-tRNA(Pro) + AMP + diphosphate. Its function is as follows. Catalyzes the attachment of proline to tRNA(Pro) in a two-step reaction: proline is first activated by ATP to form Pro-AMP and then transferred to the acceptor end of tRNA(Pro). As ProRS can inadvertently accommodate and process non-cognate amino acids such as alanine and cysteine, to avoid such errors it has two additional distinct editing activities against alanine. One activity is designated as 'pretransfer' editing and involves the tRNA(Pro)-independent hydrolysis of activated Ala-AMP. The other activity is designated 'posttransfer' editing and involves deacylation of mischarged Ala-tRNA(Pro). The misacylated Cys-tRNA(Pro) is not edited by ProRS. This is Proline--tRNA ligase from Blochmanniella pennsylvanica (strain BPEN).